A 359-amino-acid polypeptide reads, in one-letter code: Methyltransferase eqxD (359 aa).

S-adenosyl-L-methionine contacts are provided by residues G198 to G199, D224, S248 to F249, R264, and R265.

The protein belongs to the class I-like SAM-binding methyltransferase superfamily. Cation-independent O-methyltransferase family.

The enzyme catalyses trichosetin + S-adenosyl-L-methionine = equisetin + S-adenosyl-L-homocysteine + H(+). The protein operates within mycotoxin biosynthesis. In terms of biological role, methyltransferase; part of the gene cluster that mediates the biosynthesis of equisetin, a trans-fused decalin-containing tetramic acid with antimicrobial activity. The PKS module of eqxS together with the enoylreductase eqxC catalyze the formation of the polyketide unit which is then conjugated to L-serine by the condensation domain of the eqxS NRPS module. Activity of the Dieckmann cyclase domain (RED) results in release of the Dieckmann product intermediate. Diels-Alderase eqx3 is involved in endo-selective Diels-Alder cycloaddition to form the decalin ring, leading to the production of N-desmethylequisetin also called trichosetin. Subsequent N-methylation is carried out by eqxD to give equisetin. This Fusarium heterosporum protein is Methyltransferase eqxD.